The sequence spans 127 residues: UPF0738 protein Bsph_1225 (127 aa).

This sequence belongs to the UPF0738 family.

The chain is UPF0738 protein Bsph_1225 from Lysinibacillus sphaericus (strain C3-41).